The chain runs to 198 residues: MSKVLILKSSILGGYSQSAVLIDHLASHWETQGAAITVRDLGGKDVLPMVDGEIASGLRGGAELSARQQEMLALSDTLVSELKANDTIVIAAPMYNFTIPAQLKNWIDFIARAGVTFTYTETGPKGLVEGKRAVLVTTRGGAHKDGPTDHVVPYLKTVLGFIGITNVEVVYAEALNMGPEAHDKGMSEAKHSIDQLKA.

Residues S10, 16–18 (SQS), 94–97 (MYNF), and 138–141 (TRGG) each bind FMN.

It belongs to the azoreductase type 1 family. In terms of assembly, homodimer. The cofactor is FMN.

It carries out the reaction 2 a quinone + NADH + H(+) = 2 a 1,4-benzosemiquinone + NAD(+). The catalysed reaction is N,N-dimethyl-1,4-phenylenediamine + anthranilate + 2 NAD(+) = 2-(4-dimethylaminophenyl)diazenylbenzoate + 2 NADH + 2 H(+). Functionally, quinone reductase that provides resistance to thiol-specific stress caused by electrophilic quinones. In terms of biological role, also exhibits azoreductase activity. Catalyzes the reductive cleavage of the azo bond in aromatic azo compounds to the corresponding amines. This is FMN-dependent NADH:quinone oxidoreductase from Shewanella baltica (strain OS223).